The primary structure comprises 344 residues: Uroporphyrinogen decarboxylase (344 aa).

Substrate-binding positions include 26 to 30 (RQAGR), F45, D75, Y151, S206, and H320.

It belongs to the uroporphyrinogen decarboxylase family. In terms of assembly, homodimer.

The protein localises to the cytoplasm. It carries out the reaction uroporphyrinogen III + 4 H(+) = coproporphyrinogen III + 4 CO2. It participates in porphyrin-containing compound metabolism; protoporphyrin-IX biosynthesis; coproporphyrinogen-III from 5-aminolevulinate: step 4/4. Its function is as follows. Catalyzes the decarboxylation of four acetate groups of uroporphyrinogen-III to yield coproporphyrinogen-III. This is Uroporphyrinogen decarboxylase from Staphylococcus haemolyticus (strain JCSC1435).